Here is a 336-residue protein sequence, read N- to C-terminus: D-alanine--D-alanine ligase (336 aa).

An ATP-grasp domain is found at 124 to 330; sequence KMWFSALGIP…FTEYLSLVIN (207 aa). ATP is bound at residue 154-209; that stretch reads ALENWGSIFVKAASQGSSVGCYKVDDSSKVAGVLKDAFGYAPYVIVEKTIKARELE. Mg(2+) is bound by residues aspartate 284, glutamate 297, and asparagine 299.

The protein belongs to the D-alanine--D-alanine ligase family. Requires Mg(2+) as cofactor. It depends on Mn(2+) as a cofactor.

The protein localises to the cytoplasm. It catalyses the reaction 2 D-alanine + ATP = D-alanyl-D-alanine + ADP + phosphate + H(+). It participates in cell wall biogenesis; peptidoglycan biosynthesis. Its function is as follows. Cell wall formation. The protein is D-alanine--D-alanine ligase of Shewanella sp. (strain MR-4).